The following is a 643-amino-acid chain: Probable potassium transport system protein Kup 2 (643 aa).

Residues 1–20 form a disordered region; it reads MSSHVPSFLRGTPDMTAHGG. A run of 12 helical transmembrane segments spans residues 27–47, 70–90, 120–140, 157–177, 185–205, 231–251, 267–287, 300–320, 357–377, 389–409, 419–439, and 440–460; these read VAGLMLAAIGVVFGDIGTSPL, VLSLVFWAITIIVSFKYVIII, LMVSALGIFAAALFYGDSIIT, PHLEQWVVPLTIVILFVLFAI, VGKMFGPVMLVWFLTLAILGI, GWHAFLALGSVVLAVTGAEAL, WYLLVLPALILNYFGQGALLI, LAPASLALPLVILATLATVIA, IYLPFVNWLLMCMVMVLVVGF, VAVTGTMVIDALLVGTVMLLI, WLIGGFLVVDLAFFLANSIKI, and PDGGWFPLVVGGLLFTILTTW.

It belongs to the HAK/KUP transporter (TC 2.A.72) family.

It localises to the cell inner membrane. It carries out the reaction K(+)(in) + H(+)(in) = K(+)(out) + H(+)(out). Its function is as follows. Transport of potassium into the cell. Likely operates as a K(+):H(+) symporter. The sequence is that of Probable potassium transport system protein Kup 2 from Paramagnetospirillum magneticum (strain ATCC 700264 / AMB-1) (Magnetospirillum magneticum).